A 93-amino-acid polypeptide reads, in one-letter code: Phosphoribosyl-ATP pyrophosphatase (93 aa).

This sequence belongs to the PRA-PH family.

The protein localises to the cytoplasm. The catalysed reaction is 1-(5-phospho-beta-D-ribosyl)-ATP + H2O = 1-(5-phospho-beta-D-ribosyl)-5'-AMP + diphosphate + H(+). It participates in amino-acid biosynthesis; L-histidine biosynthesis; L-histidine from 5-phospho-alpha-D-ribose 1-diphosphate: step 2/9. The chain is Phosphoribosyl-ATP pyrophosphatase from Mycolicibacterium smegmatis (strain ATCC 700084 / mc(2)155) (Mycobacterium smegmatis).